The following is a 254-amino-acid chain: Chymotrypsin-like serine proteinase (254 aa).

A signal peptide spans 1–18 (MNALLNILLCTLAATALA). The propeptide at 19–23 (EISPN) is activation peptide. The Peptidase S1 domain maps to 24-254 (IVGGSNAAAG…SSFYNWVQTQ (231 aa)). Cysteines 53 and 69 form a disulfide. Catalysis depends on charge relay system residues His68 and Asp117. Intrachain disulfides connect Cys146-Cys218, Cys181-Cys199, and Cys208-Cys233. Residue Ser212 is the Charge relay system of the active site.

Belongs to the peptidase S1 family. As to quaternary structure, monomer. Expressed specifically in the distal quarter of the intestine.

It is found in the secreted. The protein resides in the extracellular space. Its activity is regulated as follows. Activated by an autocatalytic mechanism. Specificity similar to chymotrypsin. The chain is Chymotrypsin-like serine proteinase from Haliotis rufescens (California red abalone).